Consider the following 395-residue polypeptide: Endophilin-B2 (395 aa).

Met-1 bears the N-acetylmethionine mark. Residues Met-1 to Phe-27 are membrane-binding amphipathic helix. Ser-10 carries the phosphoserine modification. In terms of domain architecture, BAR spans Glu-24–Gly-287. Coiled-coil stretches lie at residues Ile-116–Phe-132 and Ala-206–Glu-240. One can recognise an SH3 domain in the interval Ser-335–Ser-395. Position 395 is a phosphoserine (Ser-395).

The protein belongs to the endophilin family. As to quaternary structure, homodimer, and heterodimer with SH3GLB1.

Its subcellular location is the cytoplasm. This chain is Endophilin-B2 (SH3GLB2), found in Bos taurus (Bovine).